We begin with the raw amino-acid sequence, 1586 residues long: Vacuolar protein sorting/targeting protein 10 (1586 aa).

Positions 1–21 are cleaved as a signal peptide; that stretch reads MRNNWNWLIFLVPFILSLTTA. At 22 to 1394 the chain is on the lumenal side; the sequence is YTPDISVVKN…YYGREVKGHK (1373 aa). BNR repeat units lie at residues 450 to 460 and 496 to 507; these read YVSRDGGVTWN and YFSLDQGKSWEK. The disordered stretch occupies residues 692 to 711; the sequence is VDNGGDGNGDEKNPNQGDSN. BNR repeat units follow at residues 792 to 801 and 846 to 856; these read YVSDDGGATF and YITDDAGATFN. An N-linked (GlcNAc...) asparagine glycan is attached at Asn1004. BNR repeat units lie at residues 1136–1146 and 1177–1187; these read FLSTDGGVTWK and YYSLDEGQTWK. N-linked (GlcNAc...) asparagine glycosylation occurs at Asn1300. The helical transmembrane segment at 1395–1415 threads the bilayer; it reads LFFLIFIPLIIFLATVLFVYD. Over 1416–1586 the chain is Cytoplasmic; that stretch reads RGIRRNGGFK…QHEVNKPTTS (171 aa). Residues 1527 to 1586 are disordered; that stretch reads FNQDDNLVRTPFADDVEEEEEEREGEGEGEQSNPSDERLFDIDDNEDEDEQHEVNKPTTS. Composition is skewed to acidic residues over residues 1540–1555 and 1568–1577; these read DDVE…EGEG and IDDNEDEDEQ.

It belongs to the VPS10-related sortilin family.

The protein localises to the golgi apparatus. It localises to the trans-Golgi network membrane. It is found in the prevacuolar compartment membrane. Functions as a sorting receptor in the Golgi compartment required for the intracellular sorting and delivery of soluble vacuolar proteins, like carboxypeptidase Y (CPY) and proteinase A. Executes multiple rounds of sorting by cycling between the late Golgi and a prevacuolar endosome-like compartment. This Candida albicans (strain WO-1) (Yeast) protein is Vacuolar protein sorting/targeting protein 10 (VPS10).